A 543-amino-acid chain; its full sequence is MLTLLHLLSAVALLVWGTHIVRTGVMRVFGARLRTVLSRSVEKKPLAFCAGIGVTALVQSSNATTMLVTSFVAQDLVALAPALVIVLGADVGTALMARILTFDLSWLSPLLIFIGVIFFLGRKQSRAGQLGRVGIGLGLILLALELIVQAVTPITQANGVQVIFASLTGDILLDALIGAMFAIISYSSLAAVLLTATLTAAGIISFPVALCLVIGANLGSGLLAMLNNSAANAAARRVALGSLLFKLVGSLIILPFVHLLAETMGKLSLPKAELVIYFHVFYNLVRCLVMLPFVDPMARFCKTIIRDEPELDTQLRPKHLDVSALDTPTLALANAARETLRIGDAMEQMMEGLNKVMHGEPRQEKELRKLADDINVLYTAIKLYLARMPKEELAEEESRRWAEIIEMSLNLEQASDIVERMGSEIADKSLAARRAFSLDGLKELDALYEQLLSNLKLAMSVFFSGDVTSARRLRRSKHRFRILNRRYSHAHVDRLHQQNVQSIETSSLHLGLLGDMQRLNSLFCSVAYSVLEQPDEDEGRDEY.

9 consecutive transmembrane segments (helical) span residues 1–21 (MLTL…THIV), 48–68 (FCAG…TMLV), 76–96 (LVAL…TALM), 99–119 (ILTF…VIFF), 134–154 (GIGL…VTPI), 175–195 (ALIG…VLLT), 196–216 (ATLT…VIGA), 240–260 (LGSL…VHLL), and 274–294 (LVIY…LPFV).

This sequence belongs to the YjbB family.

It localises to the cell inner membrane. The enzyme catalyses phosphate(in) = phosphate(out). Functionally, might be involved in phosphate export. Overproduction of YjbB reduces the elevated levels of polyphosphate (polyP) in a phoU mutant that accumulates 1000-fold higher levels of polyP than the wild type, suggesting that YjbB exports excess intracellular phosphate (Pi) in the phoU mutant and thus reduces the levels of polyP. The protein is Putative inorganic phosphate export protein YjbB (yjbB) of Escherichia coli (strain K12).